Consider the following 444-residue polypeptide: Forkhead box protein F2 (444 aa).

Positions 32–98 (PAAAAAAAAA…KKASSGLRRP (67 aa)) are disordered. Residues 34 to 75 (AAAAAAAAPETTSSSSSSSSASCASSSSSSNSASAPSAACKS) show a composition bias toward low complexity. The segment covering 76–87 (AGGGGAGAGSGG) has biased composition (gly residues). Residues 99-190 (EKPPYSYIAL…EFMFEEGSFR (92 aa)) constitute a DNA-binding region (fork-head). 2 disordered regions span residues 256 to 323 (GAGA…SPAM) and 338 to 367 (AHWSSPGASPYLKQPPALTPSSNPAASAGL). The segment covering 263 to 274 (AHPHHHHHHHVP) has biased composition (basic residues). The segment covering 293–308 (GPGGVGAAGGGGGGDY) has biased composition (gly residues). A compositionally biased stretch (low complexity) spans 309–323 (GPDSSSSPVPSSPAM).

Interacts with the transcription factors TBP and TFIIB. Lung and placenta. Predominantly expressed in gastrointestinal tract including stomach.

The protein localises to the nucleus. Its function is as follows. Probable transcription activator for a number of lung-specific genes. Mediates up-regulation of the E3 ligase IRF2BPL and drives ubiquitination and degradation of CTNNB1. The protein is Forkhead box protein F2 (FOXF2) of Homo sapiens (Human).